The sequence spans 999 residues: Helicase required for RNAi-mediated heterochromatin assembly 1 (999 aa).

The tract at residues 61–90 (EQIETSETSKTQDSEGNKVDKNLKENKSIR) is disordered. The segment covering 70–88 (KTQDSEGNKVDKNLKENKS) has biased composition (basic and acidic residues). Phosphoserine is present on Ser-94. The span at 106–124 (RNDITSGKNREFENEHHPA) shows a compositional bias: basic and acidic residues. The disordered stretch occupies residues 106 to 131 (RNDITSGKNREFENEHHPASDTSSWR). Residue 393 to 400 (GPPGTGKS) participates in ATP binding.

Cid12, hrr1 and rdp1 interact forming the RNA-directed RNA polymerase complex (RDRC). The RDRC complex interacts with the RITS complex via interaction between ago1 and hrr1. Clr4 has a role in mediating this interaction.

Its subcellular location is the cytoplasm. The protein resides in the nucleus. It catalyses the reaction ATP + H2O = ADP + phosphate + H(+). In terms of biological role, has a role in the RNA interference (RNAi) pathway which is important for heterochromatin formation and accurate chromosome segregation. A member of the RNA-directed RNA polymerase complex (RDRC) which is involved in the generation of small interfering RNAs (siRNAs) and mediate their association with the RNA-induced transcriptional silencing (RITS) complex. RITS acts as a priming complex for dsRNA synthesis at the site of non-coding centromeric RNA. The sequence is that of Helicase required for RNAi-mediated heterochromatin assembly 1 (hrr1) from Schizosaccharomyces pombe (strain 972 / ATCC 24843) (Fission yeast).